The primary structure comprises 272 residues: Shikimate dehydrogenase (NADP(+)) (272 aa).

Shikimate is bound by residues 14 to 16 and T61; that span reads SKS. K65 serves as the catalytic Proton acceptor. NADP(+) is bound at residue E77. The shikimate site is built by N86 and D102. NADP(+) contacts are provided by residues 126–130, 149–154, and M213; these read GAGGA and NRTVSR. Y215 lines the shikimate pocket. G237 serves as a coordination point for NADP(+).

This sequence belongs to the shikimate dehydrogenase family. In terms of assembly, homodimer.

It carries out the reaction shikimate + NADP(+) = 3-dehydroshikimate + NADPH + H(+). It participates in metabolic intermediate biosynthesis; chorismate biosynthesis; chorismate from D-erythrose 4-phosphate and phosphoenolpyruvate: step 4/7. Its function is as follows. Involved in the biosynthesis of the chorismate, which leads to the biosynthesis of aromatic amino acids. Catalyzes the reversible NADPH linked reduction of 3-dehydroshikimate (DHSA) to yield shikimate (SA). The chain is Shikimate dehydrogenase (NADP(+)) from Shigella flexneri.